The primary structure comprises 381 residues: Curved DNA-binding protein (381 aa).

Position 8 is a phosphoserine (Ser8). Thr362 carries the phosphothreonine modification. The Nuclear localization signal motif lies at 368 to 375 (KNKKKSKK).

It belongs to the peptidase M24 family.

Its subcellular location is the nucleus. In terms of biological role, a non-essential protein that preferentially binds curved DNA. Binds non-curved DNA with a much lower affinity. This chain is Curved DNA-binding protein (cdb4), found in Schizosaccharomyces pombe (strain 972 / ATCC 24843) (Fission yeast).